A 197-amino-acid chain; its full sequence is Imidazoleglycerol-phosphate dehydratase (197 aa).

Belongs to the imidazoleglycerol-phosphate dehydratase family.

The protein resides in the cytoplasm. The enzyme catalyses D-erythro-1-(imidazol-4-yl)glycerol 3-phosphate = 3-(imidazol-4-yl)-2-oxopropyl phosphate + H2O. The protein operates within amino-acid biosynthesis; L-histidine biosynthesis; L-histidine from 5-phospho-alpha-D-ribose 1-diphosphate: step 6/9. This is Imidazoleglycerol-phosphate dehydratase from Hahella chejuensis (strain KCTC 2396).